The following is a 164-amino-acid chain: MLNREDNQYQEKLLKISRVSKTTKGGRTISFSVLAAVGDGEGKIGLGLGKANGVPDAIRKAIAAAKKNIVKISLKNNTIPHEIAGKWGATTLWMAPAYEGTGVIAGSASREILELVGVHDILTKIKGSRNKHNVARATVEALKLLRTAEQIAALRGLEVKDILS.

The S5 DRBM domain occupies 9–72 (YQEKLLKISR…AAAKKNIVKI (64 aa)).

The protein belongs to the universal ribosomal protein uS5 family. In terms of assembly, part of the 30S ribosomal subunit. Contacts proteins S4 and S8.

In terms of biological role, with S4 and S12 plays an important role in translational accuracy. Functionally, located at the back of the 30S subunit body where it stabilizes the conformation of the head with respect to the body. In Fusobacterium nucleatum subsp. nucleatum (strain ATCC 25586 / DSM 15643 / BCRC 10681 / CIP 101130 / JCM 8532 / KCTC 2640 / LMG 13131 / VPI 4355), this protein is Small ribosomal subunit protein uS5.